A 165-amino-acid chain; its full sequence is Interferon gamma (165 aa).

The N-terminal stretch at 1–23 (MKYTSYILAFQLCIVLGSLGCYC) is a signal peptide. Q24 bears the Pyrrolidone carboxylic acid mark. 2 N-linked (GlcNAc...) asparagine glycosylation sites follow: N48 and N120.

The protein belongs to the type II (or gamma) interferon family. In terms of assembly, homodimer. Interacts with IFNGR1 (via extracellular domain); this interaction promotes IFNGR1 dimerization. As to expression, released primarily from activated T lymphocytes.

The protein localises to the secreted. In terms of biological role, type II interferon produced by immune cells such as T-cells and NK cells that plays crucial roles in antimicrobial, antiviral, and antitumor responses by activating effector immune cells and enhancing antigen presentation. Primarily signals through the JAK-STAT pathway after interaction with its receptor IFNGR1 to affect gene regulation. Upon IFNG binding, IFNGR1 intracellular domain opens out to allow association of downstream signaling components JAK2, JAK1 and STAT1, leading to STAT1 activation, nuclear translocation and transcription of IFNG-regulated genes. Many of the induced genes are transcription factors such as IRF1 that are able to further drive regulation of a next wave of transcription. Plays a role in class I antigen presentation pathway by inducing a replacement of catalytic proteasome subunits with immunoproteasome subunits. In turn, increases the quantity, quality, and repertoire of peptides for class I MHC loading. Increases the efficiency of peptide generation also by inducing the expression of activator PA28 that associates with the proteasome and alters its proteolytic cleavage preference. Up-regulates as well MHC II complexes on the cell surface by promoting expression of several key molecules such as cathepsins B/CTSB, H/CTSH, and L/CTSL. Participates in the regulation of hematopoietic stem cells during development and under homeostatic conditions by affecting their development, quiescence, and differentiation. The chain is Interferon gamma (IFNG) from Macaca fascicularis (Crab-eating macaque).